The sequence spans 194 residues: HTH-type transcriptional regulator BetI (194 aa).

One can recognise an HTH tetR-type domain in the interval 8–68 (EIRRAQLIDA…ATMRHVLRDL (61 aa)). The segment at residues 31–50 (TLASVAQRANISTGIVSHYF) is a DNA-binding region (H-T-H motif).

It functions in the pathway amine and polyamine biosynthesis; betaine biosynthesis via choline pathway [regulation]. In terms of biological role, repressor involved in the biosynthesis of the osmoprotectant glycine betaine. It represses transcription of the choline transporter BetT and the genes of BetAB involved in the synthesis of glycine betaine. This is HTH-type transcriptional regulator BetI from Burkholderia cenocepacia (strain ATCC BAA-245 / DSM 16553 / LMG 16656 / NCTC 13227 / J2315 / CF5610) (Burkholderia cepacia (strain J2315)).